Reading from the N-terminus, the 119-residue chain is Nascent polypeptide-associated complex protein (119 aa).

The NAC-A/B domain maps to 5 to 73 (RMNSREMRRL…MREVPKEPEE (69 aa)).

This sequence belongs to the NAC-alpha family. In terms of assembly, homodimer. Interacts with the ribosome. Binds ribosomal RNA.

Its function is as follows. Contacts the emerging nascent chain on the ribosome. This Thermoplasma acidophilum (strain ATCC 25905 / DSM 1728 / JCM 9062 / NBRC 15155 / AMRC-C165) protein is Nascent polypeptide-associated complex protein.